The sequence spans 750 residues: 1,4-alpha-glucan branching enzyme GlgB (750 aa).

The active-site Nucleophile is the Asp-425. Catalysis depends on Glu-478, which acts as the Proton donor.

It belongs to the glycosyl hydrolase 13 family. GlgB subfamily. In terms of assembly, monomer.

The catalysed reaction is Transfers a segment of a (1-&gt;4)-alpha-D-glucan chain to a primary hydroxy group in a similar glucan chain.. Its pathway is glycan biosynthesis; glycogen biosynthesis. Its function is as follows. Catalyzes the formation of the alpha-1,6-glucosidic linkages in glycogen by scission of a 1,4-alpha-linked oligosaccharide from growing alpha-1,4-glucan chains and the subsequent attachment of the oligosaccharide to the alpha-1,6 position. The chain is 1,4-alpha-glucan branching enzyme GlgB from Cupriavidus pinatubonensis (strain JMP 134 / LMG 1197) (Cupriavidus necator (strain JMP 134)).